The sequence spans 114 residues: Class I hydrophobin 6 (114 aa).

The N-terminal stretch at 1 to 19 (MLFKQLILVATALTTLAVA) is a signal peptide. Cystine bridges form between Cys33–Cys93, Cys40–Cys87, Cys41–Cys74, and Cys94–Cys107. Asn42 carries an N-linked (GlcNAc...) asparagine glycan.

This sequence belongs to the fungal hydrophobin family. In terms of assembly, self-assembles to form functional amyloid fibrils called rodlets. Self-assembly into fibrillar rodlets occurs spontaneously at hydrophobic:hydrophilic interfaces and the rodlets further associate laterally to form amphipathic monolayers.

Its subcellular location is the secreted. The protein resides in the cell wall. In terms of biological role, aerial growth, conidiation, and dispersal of filamentous fungi in the environment rely upon a capability of their secreting small amphipathic proteins called hydrophobins (HPBs) with low sequence identity. Class I can self-assemble into an outermost layer of rodlet bundles on aerial cell surfaces, conferring cellular hydrophobicity that supports fungal growth, development and dispersal; whereas Class II form highly ordered films at water-air interfaces through intermolecular interactions but contribute nothing to the rodlet structure. This chain is Class I hydrophobin 6, found in Pleurotus ostreatus (strain PC15) (Oyster mushroom).